The sequence spans 415 residues: Acetyl-CoA acetyltransferase 1 (415 aa).

The Acyl-thioester intermediate role is filled by Cys-99. A CoA-binding site is contributed by Lys-239. Residue Ala-256 coordinates K(+). A CoA-binding site is contributed by Ser-260. Residue Val-357 participates in K(+) binding. Active-site proton acceptor residues include His-361 and Cys-391.

Belongs to the thiolase-like superfamily. Thiolase family. In terms of tissue distribution, expressed in the vascular system of roots, cotyledons, young leaves, fully expanded leaves, stems, flowers, and funiculi of siliques.

Its subcellular location is the cytoplasm. It localises to the peroxisome. The enzyme catalyses 2 acetyl-CoA = acetoacetyl-CoA + CoA. The protein operates within metabolic intermediate biosynthesis; (R)-mevalonate biosynthesis; (R)-mevalonate from acetyl-CoA: step 1/3. Its function is as follows. Catalyzes the condensation of two molecules of acetyl-CoA to produce acetoacetyl-CoA. This Arabidopsis thaliana (Mouse-ear cress) protein is Acetyl-CoA acetyltransferase 1.